Reading from the N-terminus, the 72-residue chain is Translation initiation factor IF-1 (72 aa).

Positions 1–72 constitute an S1-like domain; it reads MSKQSSIEQD…TKGRIVFRYK (72 aa).

It belongs to the IF-1 family. In terms of assembly, component of the 30S ribosomal translation pre-initiation complex which assembles on the 30S ribosome in the order IF-2 and IF-3, IF-1 and N-formylmethionyl-tRNA(fMet); mRNA recruitment can occur at any time during PIC assembly.

The protein localises to the cytoplasm. Its function is as follows. One of the essential components for the initiation of protein synthesis. Stabilizes the binding of IF-2 and IF-3 on the 30S subunit to which N-formylmethionyl-tRNA(fMet) subsequently binds. Helps modulate mRNA selection, yielding the 30S pre-initiation complex (PIC). Upon addition of the 50S ribosomal subunit IF-1, IF-2 and IF-3 are released leaving the mature 70S translation initiation complex. The sequence is that of Translation initiation factor IF-1 from Cytophaga hutchinsonii (strain ATCC 33406 / DSM 1761 / CIP 103989 / NBRC 15051 / NCIMB 9469 / D465).